A 109-amino-acid polypeptide reads, in one-letter code: Parvalbumin alpha (109 aa).

EF-hand domains are found at residues 38–73 and 77–109; these read KSKE…FTPE and LSDK…VSES. Residues Asp51, Asp53, Ser55, Phe57, Glu59, Glu62, Asp90, Asp92, Asp94, Lys96, and Glu101 each coordinate Ca(2+).

It belongs to the parvalbumin family.

In muscle, parvalbumin is thought to be involved in relaxation after contraction. It binds two calcium ions. This is Parvalbumin alpha from Pelophylax lessonae (Pool frog).